A 107-amino-acid chain; its full sequence is Heme-degrading monooxygenase (107 aa).

Residues 2–94 (IIVTNTAKIT…YILDNKIAYY (93 aa)) enclose the ABM domain. Residue N6 participates in Fe cation binding. A heme-binding site is contributed by H76.

It belongs to the antibiotic biosynthesis monooxygenase family. Heme-degrading monooxygenase IsdG subfamily. As to quaternary structure, homodimer.

The protein localises to the cytoplasm. The enzyme catalyses heme b + 3 reduced [NADPH--hemoprotein reductase] + 3 O2 = biliverdin IXalpha + CO + Fe(2+) + 3 oxidized [NADPH--hemoprotein reductase] + 3 H2O + H(+). Functionally, allows bacterial pathogens to use the host heme as an iron source. Catalyzes the oxidative degradation of the heme macrocyclic porphyrin ring to the biliverdin in the presence of a suitable electron donor such as ascorbate or NADPH--cytochrome P450 reductase, with subsequent release of free iron. This Bacillus cereus (strain ATCC 14579 / DSM 31 / CCUG 7414 / JCM 2152 / NBRC 15305 / NCIMB 9373 / NCTC 2599 / NRRL B-3711) protein is Heme-degrading monooxygenase.